The primary structure comprises 161 residues: Ribonuclease H (161 aa).

Residues G3–E144 enclose the RNase H type-1 domain. Mg(2+) is bound by residues D12, E50, D72, and D136. Residues E133–A161 are disordered. Residues E150 to A161 are compositionally biased toward polar residues.

The protein belongs to the RNase H family. As to quaternary structure, monomer. It depends on Mg(2+) as a cofactor.

It is found in the cytoplasm. The catalysed reaction is Endonucleolytic cleavage to 5'-phosphomonoester.. Endonuclease that specifically degrades the RNA of RNA-DNA hybrids. This chain is Ribonuclease H, found in Shewanella halifaxensis (strain HAW-EB4).